Here is an 87-residue protein sequence, read N- to C-terminus: Large ribosomal subunit protein bL28 (87 aa).

This sequence belongs to the bacterial ribosomal protein bL28 family.

The protein is Large ribosomal subunit protein bL28 of Methylacidiphilum infernorum (isolate V4) (Methylokorus infernorum (strain V4)).